The sequence spans 262 residues: MSVTNKVLVLKVGGALLQCEMGMARLMDTARQLLEKGEQVVLVHGGGCLVDEQLKANGMETVKLDGLRVTPAEQMPIIAGALAGTSNKLLQGAAAKAGVVSMGMSLCDANMVTAVIKDERLGMVGEVSPKDAKALEFILAQGWLPIISSIAMGEDGELLNVNADQAASVLAKLLGGKLVLLSDVSGVLDGKGKLIPSLNSQEIDELVKLGVIEKGMKVKVEAALEVAQWLGQPVQVASWRDSGQMAALIKGEAVGTQIQPQE.

Substrate contacts are provided by residues 46–47, arginine 68, and asparagine 160; that span reads GG.

Belongs to the acetylglutamate kinase family. ArgB subfamily.

The protein localises to the cytoplasm. It catalyses the reaction N-acetyl-L-glutamate + ATP = N-acetyl-L-glutamyl 5-phosphate + ADP. It functions in the pathway amino-acid biosynthesis; L-arginine biosynthesis; N(2)-acetyl-L-ornithine from L-glutamate: step 2/4. In terms of biological role, catalyzes the ATP-dependent phosphorylation of N-acetyl-L-glutamate. The polypeptide is Acetylglutamate kinase (Shewanella amazonensis (strain ATCC BAA-1098 / SB2B)).